Consider the following 338-residue polypeptide: Phenylalanine--tRNA ligase alpha subunit (338 aa).

A Mg(2+)-binding site is contributed by E253.

This sequence belongs to the class-II aminoacyl-tRNA synthetase family. Phe-tRNA synthetase alpha subunit type 1 subfamily. As to quaternary structure, tetramer of two alpha and two beta subunits. Mg(2+) is required as a cofactor.

Its subcellular location is the cytoplasm. The enzyme catalyses tRNA(Phe) + L-phenylalanine + ATP = L-phenylalanyl-tRNA(Phe) + AMP + diphosphate + H(+). The sequence is that of Phenylalanine--tRNA ligase alpha subunit from Geotalea daltonii (strain DSM 22248 / JCM 15807 / FRC-32) (Geobacter daltonii).